We begin with the raw amino-acid sequence, 244 residues long: tRNA pseudouridine synthase A (244 aa).

D52 (nucleophile) is an active-site residue. A substrate-binding site is contributed by Y110.

The protein belongs to the tRNA pseudouridine synthase TruA family. Homodimer.

The enzyme catalyses uridine(38/39/40) in tRNA = pseudouridine(38/39/40) in tRNA. Functionally, formation of pseudouridine at positions 38, 39 and 40 in the anticodon stem and loop of transfer RNAs. The polypeptide is tRNA pseudouridine synthase A (Caldicellulosiruptor saccharolyticus (strain ATCC 43494 / DSM 8903 / Tp8T 6331)).